The primary structure comprises 335 residues: S-adenosylmethionine:tRNA ribosyltransferase-isomerase (335 aa).

The protein belongs to the QueA family. In terms of assembly, monomer.

Its subcellular location is the cytoplasm. It catalyses the reaction 7-aminomethyl-7-carbaguanosine(34) in tRNA + S-adenosyl-L-methionine = epoxyqueuosine(34) in tRNA + adenine + L-methionine + 2 H(+). It functions in the pathway tRNA modification; tRNA-queuosine biosynthesis. Its function is as follows. Transfers and isomerizes the ribose moiety from AdoMet to the 7-aminomethyl group of 7-deazaguanine (preQ1-tRNA) to give epoxyqueuosine (oQ-tRNA). In Thermotoga petrophila (strain ATCC BAA-488 / DSM 13995 / JCM 10881 / RKU-1), this protein is S-adenosylmethionine:tRNA ribosyltransferase-isomerase.